Consider the following 496-residue polypeptide: RNA-binding motif protein, Y chromosome, family 1 member F/J (496 aa).

Residues 8 to 85 (GKLFIGGLNR…KAIKVEQAKK (78 aa)) enclose the RRM domain. 2 disordered regions span residues 81-345 (EQAK…YAPP) and 452-496 (KDQR…SSRY). 2 stretches are compositionally biased toward low complexity: residues 97-114 (PASS…SARG) and 149-159 (PVKRGPSSRSG). Positions 175 to 184 (NSWMGSQGPM) are enriched in polar residues. Composition is skewed to basic and acidic residues over residues 204-214 (RNDRMSTRHDG), 242-253 (DNGHSNRDEHSS), 276-289 (AYRD…DESY), 313-326 (GYRD…HESY), 335-345 (SSRETRDYAPP), and 484-496 (GESR…SSRY).

Interacts with splicing factor proteins SFRS3/SRP20, TRA2B/SFRS10, KHDRBS1/SAM68 and KHDRBS3. In terms of tissue distribution, testis-specific.

It localises to the nucleus. Its function is as follows. RNA-binding protein which may be involved in spermatogenesis. Required for sperm development, possibly by participating in pre-mRNA splicing in the testis. The polypeptide is RNA-binding motif protein, Y chromosome, family 1 member F/J (RBMY1F) (Homo sapiens (Human)).